A 517-amino-acid polypeptide reads, in one-letter code: Crotonobetaine/carnitine--CoA ligase (517 aa).

This sequence belongs to the ATP-dependent AMP-binding enzyme family.

It carries out the reaction 4-(trimethylamino)butanoate + ATP + CoA = 4-(trimethylamino)butanoyl-CoA + AMP + diphosphate. It catalyses the reaction crotonobetaine + ATP + CoA = crotonobetainyl-CoA + AMP + diphosphate. The catalysed reaction is (R)-carnitine + ATP + CoA = (R)-carnitinyl-CoA + AMP + diphosphate. It participates in amine and polyamine metabolism; carnitine metabolism. Functionally, catalyzes the transfer of CoA to carnitine, generating the initial carnitinyl-CoA needed for the CaiB reaction cycle. Also has activity toward crotonobetaine and gamma-butyrobetaine. This chain is Crotonobetaine/carnitine--CoA ligase, found in Escherichia coli (strain K12 / MC4100 / BW2952).